A 365-amino-acid chain; its full sequence is Probable 7-methylxanthine methyltransferase 4 (365 aa).

Tyrosine 18 contacts S-adenosyl-L-homocysteine. Threonine 25 lines the theobromine pocket. Residues cysteine 62, glutamine 67, aspartate 99, leucine 100, serine 132, and phenylalanine 133 each contribute to the S-adenosyl-L-homocysteine site. Residues tyrosine 150, histidine 153, and tryptophan 154 each contribute to the theobromine site. 4 residues coordinate Mg(2+): asparagine 170, aspartate 256, phenylalanine 258, and asparagine 259. Phenylalanine 311 contacts theobromine.

Belongs to the methyltransferase superfamily. Type-7 methyltransferase family. Mg(2+) is required as a cofactor.

The catalysed reaction is 7-methylxanthine + S-adenosyl-L-methionine = theobromine + S-adenosyl-L-homocysteine + H(+). Its pathway is alkaloid biosynthesis. Involved in the biosynthesis of theobromine. The protein is Probable 7-methylxanthine methyltransferase 4 of Theobroma cacao (Cacao).